The primary structure comprises 480 residues: Zinc finger protein ztf-6 (480 aa).

Disordered regions lie at residues 92 to 160 (CHDS…TMMV), 174 to 198 (GTNG…EEHD), 282 to 307 (LDAG…PTAS), and 328 to 351 (DANT…MKVP). 4 stretches are compositionally biased toward low complexity: residues 95–105 (SATSTTTTVSH), 131–145 (SSIE…SSSV), 174–187 (GTNG…TSSS), and 286–296 (SSENDGSTSSS). 2 consecutive C2H2-type zinc fingers follow at residues 359–383 (YICP…FVTH) and 388–410 (FNCD…QKIH). The segment at 416–441 (YQCRGCGTNYTTQNGLRLHRQRNPAC) adopts a C2H2-type 3; degenerate zinc-finger fold. The segment at 461–480 (ALSGPLSKNSSPTKQMVSAP) is disordered.

In terms of biological role, probable transcription factor, involved in regulation of dopamine neuron lineage specification. May play a role in maintaining robustness of the Wnt/beta-catenin asymmetry pathway. This Caenorhabditis elegans protein is Zinc finger protein ztf-6.